Here is a 263-residue protein sequence, read N- to C-terminus: MYVGYLLDKDNNMYPNPVRHPGLNLNPQNYVPAPPQYSDFPSYHHVPGINSDPHHGQPGGTWSSYTPSREDWHPYGPGPGASSANPTQIAFSPSDYNPVQPPGSGLLPPSINSSVPPLSPSAQRADPYEWMRRTGVPTTTTTTNGKTRTKDKYRVVYTDHQRLELEKEFHYSRYITIRRKAELAAALGLTERQVKIWFQNRRAKERKVNKKKMQQQSQQASTTTPTPPSVGTTAGMGGLCSSSSSNSNLVSPSSMPIKEEYLS.

The segment at 47 to 108 (PGINSDPHHG…VQPPGSGLLP (62 aa)) is disordered. A compositionally biased stretch (polar residues) spans 82–97 (SSANPTQIAFSPSDYN). A DNA-binding region (homeobox) is located at residues 150–209 (KDKYRVVYTDHQRLELEKEFHYSRYITIRRKAELAAALGLTERQVKIWFQNRRAKERKVN). Positions 153–174 (YRVVYTDHQRLELEKEFHYSRY) are interaction with DNA. The interaction with 5-mCpG DNA stretch occupies residues 192-203 (RQVKIWFQNRRA). The segment covering 204–213 (KERKVNKKKM) has biased composition (basic residues). The disordered stretch occupies residues 204-263 (KERKVNKKKMQQQSQQASTTTPTPPSVGTTAGMGGLCSSSSSNSNLVSPSSMPIKEEYLS). Low complexity-rich tracts occupy residues 214 to 233 (QQQS…VGTT) and 241 to 254 (SSSS…SPSS).

The protein belongs to the Caudal homeobox family.

The protein resides in the nucleus. Functionally, plays a role in transcriptional regulation. Involved in activated KRAS-mediated transcriptional activation of PRKD1. Binds to the PRKD1 promoter. Could play a role in the terminal differentiation of the intestine. Binds preferentially to methylated DNA. This is Homeobox protein CDX-1 (cdx1) from Xenopus laevis (African clawed frog).